A 311-amino-acid chain; its full sequence is MNFEHTSVLLKECIEALDIKENGIYVDGTLGGAGHSQEILKVLGKEGLLIGIDQDENALSAAGERLEEHGTKVKLVHDNFHNLDKILENLEITTIDGVLLDLGVSSHQLDERERGFSYMQDAPLDMRMDRRSGFSARDIVNDYSEKELERIIKEYGEDRWARRIAQFIVQERELAPIETTHQMVEVIKKAVPKGARKDGPHPAKRTFQAIRIEVNQELEIIEATIEAAAKHMKPGGRIAIISFHSLEDRIVKNVFRRLQNPCVCPPQFPVCKCEKEQMVKIVTRKPILPSEAELEVNPRSRSAKLRVAERV.

Residues 33–35, D53, F80, D101, and Q108 contribute to the S-adenosyl-L-methionine site; that span reads AGH.

The protein belongs to the methyltransferase superfamily. RsmH family.

It localises to the cytoplasm. The enzyme catalyses cytidine(1402) in 16S rRNA + S-adenosyl-L-methionine = N(4)-methylcytidine(1402) in 16S rRNA + S-adenosyl-L-homocysteine + H(+). In terms of biological role, specifically methylates the N4 position of cytidine in position 1402 (C1402) of 16S rRNA. The polypeptide is Ribosomal RNA small subunit methyltransferase H 1 (Alkaliphilus metalliredigens (strain QYMF)).